Here is a 580-residue protein sequence, read N- to C-terminus: E3 ubiquitin-protein ligase TRIM45 (580 aa).

The RING-type zinc-finger motif lies at 29–98; sequence CPLCLGLFKA…QIGILCPVCD (70 aa). 2 consecutive B box-type zinc fingers follow at residues 130–176 and 186–227; these read GQGL…MVDL and GKPI…CDFT. Residues cysteine 135, cysteine 138, cysteine 158, histidine 162, cysteine 191, histidine 194, cysteine 214, and histidine 219 each contribute to the Zn(2+) site. Residues 281–335 are a coiled coil; the sequence is SEGYIKAIEEHRDKLLKQLEDIRAQKENSLQLQKAQLEQLLADMRTGVEFTEHLL. One copy of the Filamin repeat lies at 394 to 497; the sequence is TKEVDPAKCV…VQGSPFTVMV (104 aa).

The protein belongs to the TRIM/RBCC family. In terms of tissue distribution, expressed in skeletal muscle, brain, heart and pancreas.

It localises to the cytoplasm. The protein resides in the nucleus. The catalysed reaction is S-ubiquitinyl-[E2 ubiquitin-conjugating enzyme]-L-cysteine + [acceptor protein]-L-lysine = [E2 ubiquitin-conjugating enzyme]-L-cysteine + N(6)-ubiquitinyl-[acceptor protein]-L-lysine.. Functionally, E3 ubiquitin-protein ligase that plays a role in the regulation of inflammatory response. Mechanistically, mediates the 'Lys-48'-linked polyubiquitination of TAB2, a regulatory protein of the kinase TAK1, leading to its degradation via the proteasomal pathway and inhibition of the TLR-mediated inflammatory immune response. May act as a transcriptional repressor in mitogen-activated protein kinase signaling pathway. The protein is E3 ubiquitin-protein ligase TRIM45 (TRIM45) of Homo sapiens (Human).